The following is a 205-amino-acid chain: MASISTWFRYMAHKLEYSLTLSLKSHRSNKLSDRELIQIICKNLFYGKITYLHSDKGPEMSPTMTANENTLLIRKIPIANTRFVFIGDAVVLKDPNDSDKYLVRRLAAVEGFEMVSGDEKEEPFVLEKNQCWVTAENQELKAKEAYDSRTFGPVSTADIVGRAIYCLRTAVDHGPVRNSQTAMGQDSPILAVELDVDEMAKNHKA.

Catalysis depends on residues Glu-59 and Arg-104.

It belongs to the peptidase S26 family. IMP1 subfamily. In terms of assembly, heterodimer of 2 subunits, IMP1A/B and IMP12.

The protein resides in the mitochondrion inner membrane. Its function is as follows. Catalyzes the removal of transit peptides required for the targeting of proteins from the mitochondrial matrix, across the inner membrane, into the inter-membrane space. This is Mitochondrial ATP-independent inner membrane protease subunit 2 from Arabidopsis thaliana (Mouse-ear cress).